Here is a 505-residue protein sequence, read N- to C-terminus: ATP synthase subunit alpha (505 aa).

170–177 (GDRQTGKT) lines the ATP pocket.

Belongs to the ATPase alpha/beta chains family. F-type ATPases have 2 components, CF(1) - the catalytic core - and CF(0) - the membrane proton channel. CF(1) has five subunits: alpha(3), beta(3), gamma(1), delta(1), epsilon(1). CF(0) has four main subunits: a(1), b(1), b'(1) and c(9-12).

The protein resides in the cellular thylakoid membrane. It carries out the reaction ATP + H2O + 4 H(+)(in) = ADP + phosphate + 5 H(+)(out). In terms of biological role, produces ATP from ADP in the presence of a proton gradient across the membrane. The alpha chain is a regulatory subunit. This Synechococcus elongatus (strain ATCC 33912 / PCC 7942 / FACHB-805) (Anacystis nidulans R2) protein is ATP synthase subunit alpha.